A 325-amino-acid polypeptide reads, in one-letter code: Probable tRNA pseudouridine synthase B (325 aa).

The Nucleophile role is filled by Asp69. The region spanning Leu236–Met311 is the PUA domain.

Belongs to the pseudouridine synthase TruB family. Type 2 subfamily.

The catalysed reaction is uridine(55) in tRNA = pseudouridine(55) in tRNA. Functionally, could be responsible for synthesis of pseudouridine from uracil-55 in the psi GC loop of transfer RNAs. The polypeptide is Probable tRNA pseudouridine synthase B (Archaeoglobus fulgidus (strain ATCC 49558 / DSM 4304 / JCM 9628 / NBRC 100126 / VC-16)).